Here is a 219-residue protein sequence, read N- to C-terminus: Elongation factor Ts (219 aa).

The tract at residues 83 to 86 (TDFV) is involved in Mg(2+) ion dislocation from EF-Tu.

This sequence belongs to the EF-Ts family.

The protein localises to the cytoplasm. In terms of biological role, associates with the EF-Tu.GDP complex and induces the exchange of GDP to GTP. It remains bound to the aminoacyl-tRNA.EF-Tu.GTP complex up to the GTP hydrolysis stage on the ribosome. The protein is Elongation factor Ts of Synechococcus sp. (strain WH7803).